The primary structure comprises 370 residues: Molybdenum import ATP-binding protein ModC (370 aa).

Positions 1-232 constitute an ABC transporter domain; it reads MLDIDVLRQQ…PDIPDFAAQR (232 aa). Residue 30 to 37 participates in ATP binding; sequence GRSGAGKT. In terms of domain architecture, Mop spans 292-363; sequence MVSVQNILAA…IKAMSLLRDE (72 aa).

It belongs to the ABC transporter superfamily. Molybdate importer (TC 3.A.1.8) family. In terms of assembly, the complex is composed of two ATP-binding proteins (ModC), two transmembrane proteins (ModB) and a solute-binding protein (ModA).

It localises to the cell inner membrane. It catalyses the reaction molybdate(out) + ATP + H2O = molybdate(in) + ADP + phosphate + H(+). Functionally, part of the ABC transporter complex ModABC involved in molybdenum import. Responsible for energy coupling to the transport system. In Rhodospirillum rubrum (strain ATCC 11170 / ATH 1.1.1 / DSM 467 / LMG 4362 / NCIMB 8255 / S1), this protein is Molybdenum import ATP-binding protein ModC.